The sequence spans 296 residues: 33 kDa chaperonin (296 aa).

Intrachain disulfides connect Cys233/Cys235 and Cys267/Cys270.

This sequence belongs to the HSP33 family. Under oxidizing conditions two disulfide bonds are formed involving the reactive cysteines. Under reducing conditions zinc is bound to the reactive cysteines and the protein is inactive.

Its subcellular location is the cytoplasm. Redox regulated molecular chaperone. Protects both thermally unfolding and oxidatively damaged proteins from irreversible aggregation. Plays an important role in the bacterial defense system toward oxidative stress. The protein is 33 kDa chaperonin of Actinobacillus pleuropneumoniae serotype 5b (strain L20).